Consider the following 340-residue polypeptide: Protein-arginine kinase (340 aa).

Residues 21–242 (VVLSSRIRLA…EQIIMQERVA (222 aa)) enclose the Phosphagen kinase C-terminal domain. Residues 24 to 28 (SSRIR), histidine 79, arginine 113, 164 to 168 (RASVM), and 195 to 200 (RGIYGE) contribute to the ATP site.

It belongs to the ATP:guanido phosphotransferase family.

The catalysed reaction is L-arginyl-[protein] + ATP = N(omega)-phospho-L-arginyl-[protein] + ADP + H(+). Its function is as follows. Catalyzes the specific phosphorylation of arginine residues in proteins. In Listeria welshimeri serovar 6b (strain ATCC 35897 / DSM 20650 / CCUG 15529 / CIP 8149 / NCTC 11857 / SLCC 5334 / V8), this protein is Protein-arginine kinase.